Consider the following 442-residue polypeptide: Syndecan-3 (442 aa).

Disordered regions lie at residues 1–25 and 55–85; these read MKPG…GPGA and RPVD…SGYF. The signal sequence occupies residues 1–44; sequence MKPGPPRRGTAQGQRVDTATHGPGARGLLLPPLLLLLLAGRAAG. Over 45–387 the chain is Extracellular; it reads AQRWRNENFE…SILERKEVLV (343 aa). Over residues 61–75 the composition is skewed to acidic residues; sequence GSGDDDSFPDDELDD. S78, S80, S82, and S89 each carry an O-linked (Xyl...) (glycosaminoglycan) serine glycan. T107 carries O-linked (GalNAc) threonine; by GALNT13 glycosylation. Disordered stretches follow at residues 151 to 175, 180 to 199, 225 to 244, 252 to 327, and 339 to 372; these read EEPS…TGAP, APAT…PATA, ATTP…DTEA, TATS…TTQP, and AAAK…SSAA. The span at 157-175 shows a compositional bias: low complexity; the sequence is ATTISTTTSTTAATTTGAP. O-linked (GalNAc) serine; by GALNT13 glycosylation is present at S161. Residues T162, T163, T170, and T172 are each glycosylated (O-linked (GalNAc) threonine; by GALNT13). Residues 276–287 show a composition bias toward low complexity; the sequence is TLPLGTTAPGPT. Residues 289 to 303 show a composition bias toward polar residues; it reads VAQTPTPESLLTTTQ. 2 O-linked (Xyl...) (glycosaminoglycan) serine glycosylation sites follow: S315 and S367. Residues 388–408 form a helical membrane-spanning segment; the sequence is AVIVGGVVGALFAAFLVTLLI. Phosphotyrosine occurs at positions 409, 419, 431, and 441. Over 409-442 the chain is Cytoplasmic; that stretch reads YRMKKKDEGSYTLEEPKQASVTYQKPDKQEEFYA. Residues 419-442 form a disordered region; that stretch reads YTLEEPKQASVTYQKPDKQEEFYA. The span at 433–442 shows a compositional bias: basic and acidic residues; it reads KPDKQEEFYA.

It belongs to the syndecan proteoglycan family. In terms of assembly, interacts with TIAM1. Interacts (via heparan sulfate chains) with PTN; this interaction mediates the neurite outgrowth-promoting signal from PTN to the cytoskeleton of growing neurites; this interaction mediates osteoblast recruitment. Interacts with MDK; this interaction induces SDC3 clustering; this interaction induces neuronal cell adhesion and neurite outgrowth. In terms of processing, O-glycosylated within the Thr/Ser-rich region which could interact with lectin domains on other molecules. High levels in neonatal brain, heart, and Schwann cells, barely detectable in neonatal or adult liver, or adult brain.

Its subcellular location is the cell membrane. Functionally, cell surface proteoglycan that may bear heparan sulfate. May have a role in the organization of cell shape by affecting the actin cytoskeleton, possibly by transferring signals from the cell surface in a sugar-dependent mechanism. The polypeptide is Syndecan-3 (Sdc3) (Rattus norvegicus (Rat)).